A 185-amino-acid polypeptide reads, in one-letter code: Ribosome-recycling factor (185 aa).

Belongs to the RRF family.

It is found in the cytoplasm. Its function is as follows. Responsible for the release of ribosomes from messenger RNA at the termination of protein biosynthesis. May increase the efficiency of translation by recycling ribosomes from one round of translation to another. This is Ribosome-recycling factor from Shewanella sp. (strain ANA-3).